A 217-amino-acid chain; its full sequence is Magnetosome protein MamA (217 aa).

TPR repeat units lie at residues 12-44 (VTLY…NDDI), 46-79 (QVYY…DAFD), 80-113 (VEVA…APDN), 114-147 (IKVA…NPVN), 148-181 (FNVR…RPNE), and 182-215 (GKVH…DERS). The segment at 41-112 (NDDIRQVYYR…LERSIADAPD (72 aa)) is N-terminal domain. Residues 113–217 (NIKVATVLGL…ANELDERSAV (105 aa)) form a C-terminal domain region.

Belongs to the magnetosome MamA family. Forms round, 20 nm diameter complexes with a central cavity. Probably binds MamC. Interacts with full-length Mms6.

The protein resides in the magnetosome membrane. In terms of biological role, probably forms a large homooligomer on which other magnetosome subunits assemble. Required for formation of functional magnetosomes from pre-existing vesicles. This Magnetospirillum gryphiswaldense (strain DSM 6361 / JCM 21280 / NBRC 15271 / MSR-1) protein is Magnetosome protein MamA.